Consider the following 716-residue polypeptide: Ciliary WD repeat-containing protein ctxp80 (716 aa).

Residues methionine 1–glutamate 53 form a disordered region. The span at glycine 8–asparagine 21 shows a compositional bias: polar residues. Positions glutamate 23 to glutamate 53 are enriched in basic and acidic residues. WD repeat units lie at residues tyrosine 167–arginine 208, lysine 213–lysine 254, serine 257–lysine 297, glycine 305–aspartate 343, histidine 345–threonine 382, histidine 424–leucine 462, aspartate 529–threonine 568, alanine 571–serine 610, threonine 639–proline 678, and glycine 683–lysine 715.

The protein belongs to the WD repeat EMAP family.

In Euplotoides octocarinatus (Freshwater ciliate), this protein is Ciliary WD repeat-containing protein ctxp80.